The chain runs to 384 residues: Carbamoyl phosphate synthase small chain (384 aa).

Positions 1–192 (MMKRIPAILV…LTDNIRVHRV (192 aa)) are CPSase. Serine 51, glycine 244, and glycine 246 together coordinate L-glutamine. In terms of domain architecture, Glutamine amidotransferase type-1 spans 196–382 (KVIVIDFGVK…IEIMTKSKNK (187 aa)). Cysteine 272 functions as the Nucleophile in the catalytic mechanism. The L-glutamine site is built by methionine 273, glutamine 276, asparagine 312, glycine 314, and phenylalanine 315. Residues histidine 355 and glutamate 357 contribute to the active site.

It belongs to the CarA family. Composed of two chains; the small (or glutamine) chain promotes the hydrolysis of glutamine to ammonia, which is used by the large (or ammonia) chain to synthesize carbamoyl phosphate. Tetramer of heterodimers (alpha,beta)4.

It is found in the plastid. Its subcellular location is the chloroplast. It catalyses the reaction hydrogencarbonate + L-glutamine + 2 ATP + H2O = carbamoyl phosphate + L-glutamate + 2 ADP + phosphate + 2 H(+). It carries out the reaction L-glutamine + H2O = L-glutamate + NH4(+). It functions in the pathway amino-acid biosynthesis; L-arginine biosynthesis; carbamoyl phosphate from bicarbonate: step 1/1. It participates in pyrimidine metabolism; UMP biosynthesis via de novo pathway; (S)-dihydroorotate from bicarbonate: step 1/3. Small subunit of the glutamine-dependent carbamoyl phosphate synthetase (CPSase). CPSase catalyzes the formation of carbamoyl phosphate from the ammonia moiety of glutamine, carbonate, and phosphate donated by ATP, constituting the first step of 2 biosynthetic pathways, one leading to arginine and/or urea and the other to pyrimidine nucleotides. The small subunit (glutamine amidotransferase) binds and cleaves glutamine to supply the large subunit with the substrate ammonia. The polypeptide is Carbamoyl phosphate synthase small chain (Pyropia yezoensis (Susabi-nori)).